The chain runs to 159 residues: Putative ribosomal RNA large subunit methyltransferase H (159 aa).

Residues L76, G108, and 127 to 132 contribute to the S-adenosyl-L-methionine site; that span reads FSKMTF.

It belongs to the RNA methyltransferase RlmH family.

It is found in the cytoplasm. It carries out the reaction pseudouridine(1915) in 23S rRNA + S-adenosyl-L-methionine = N(3)-methylpseudouridine(1915) in 23S rRNA + S-adenosyl-L-homocysteine + H(+). Specifically methylates the pseudouridine at position 1915 (m3Psi1915) in 23S rRNA. This Methanococcus maripaludis (strain C7 / ATCC BAA-1331) protein is Putative ribosomal RNA large subunit methyltransferase H.